We begin with the raw amino-acid sequence, 279 residues long: MATH domain and coiled-coil domain-containing protein At1g31390 (279 aa).

One can recognise an MATH domain in the interval 6–134 (EKKITWTIKN…NGDVKIVVEV (129 aa)). Residues 235–271 (KLDWLEKKLKEVCEARVQEIDEEWKDLTDLKENWSSD) adopt a coiled-coil conformation.

The protein is MATH domain and coiled-coil domain-containing protein At1g31390 of Arabidopsis thaliana (Mouse-ear cress).